We begin with the raw amino-acid sequence, 535 residues long: Light-independent protochlorophyllide reductase subunit B (535 aa).

Asp-36 provides a ligand contact to [4Fe-4S] cluster. Residue Asp-292 is the Proton donor of the active site. Position 428 to 429 (428 to 429 (GL)) interacts with substrate.

It belongs to the ChlB/BchB/BchZ family. Protochlorophyllide reductase is composed of three subunits; BchL, BchN and BchB. Forms a heterotetramer of two BchB and two BchN subunits. [4Fe-4S] cluster is required as a cofactor.

The catalysed reaction is chlorophyllide a + oxidized 2[4Fe-4S]-[ferredoxin] + 2 ADP + 2 phosphate = protochlorophyllide a + reduced 2[4Fe-4S]-[ferredoxin] + 2 ATP + 2 H2O. Its pathway is porphyrin-containing compound metabolism; bacteriochlorophyll biosynthesis (light-independent). Its function is as follows. Component of the dark-operative protochlorophyllide reductase (DPOR) that uses Mg-ATP and reduced ferredoxin to reduce ring D of protochlorophyllide (Pchlide) to form chlorophyllide a (Chlide). This reaction is light-independent. The NB-protein (BchN-BchB) is the catalytic component of the complex. The polypeptide is Light-independent protochlorophyllide reductase subunit B (Chlorobaculum parvum (strain DSM 263 / NCIMB 8327) (Chlorobium vibrioforme subsp. thiosulfatophilum)).